The sequence spans 459 residues: NADH oxidase (459 aa).

FAD is bound at residue Asn10. The Proton acceptor role is filled by His11. FAD contacts are provided by Ala12, Asp34, Gln35, Cys44, Val81, Ala110, Ser113, Lys143, and Tyr172. Cys44 functions as the Redox-active in the catalytic mechanism. Cys44 carries the post-translational modification Cysteine sulfinic acid (-SO2H). NAD(+)-binding residues include Ile173, Asp192, Tyr201, and Gly256. Asp294 contributes to the FAD binding site. Residue Ala310 coordinates NAD(+). Residues Leu311, Ala312, and Ser313 each contribute to the FAD site. Gly341 contributes to the NAD(+) binding site. FAD is bound at residue Phe439.

Belongs to the class-III pyridine nucleotide-disulfide oxidoreductase family. Requires FAD as cofactor.

The protein resides in the secreted. The protein localises to the cell wall. It catalyses the reaction 2 NADH + O2 + 2 H(+) = 2 NAD(+) + 2 H2O. Catalyzes the four-electron reduction of molecular oxygen to water. Plays a role in redox balance maintenance. May be involved in mediating bacterial adhesion to host cells. May be considered a potential virulence factor. This is NADH oxidase from Streptococcus pneumoniae serotype 4 (strain ATCC BAA-334 / TIGR4).